A 507-amino-acid chain; its full sequence is ATP synthase subunit alpha, chloroplastic (507 aa).

Gly170 to Thr177 is an ATP binding site.

Belongs to the ATPase alpha/beta chains family. In terms of assembly, F-type ATPases have 2 components, CF(1) - the catalytic core - and CF(0) - the membrane proton channel. CF(1) has five subunits: alpha(3), beta(3), gamma(1), delta(1), epsilon(1). CF(0) has four main subunits: a, b, b' and c.

It is found in the plastid. The protein resides in the chloroplast thylakoid membrane. The enzyme catalyses ATP + H2O + 4 H(+)(in) = ADP + phosphate + 5 H(+)(out). Its function is as follows. Produces ATP from ADP in the presence of a proton gradient across the membrane. The alpha chain is a regulatory subunit. The polypeptide is ATP synthase subunit alpha, chloroplastic (Nicotiana tabacum (Common tobacco)).